Here is a 552-residue protein sequence, read N- to C-terminus: 2-methyl-1,2-propanediol dehydrogenase (552 aa).

Belongs to the GMC oxidoreductase family. FAD is required as a cofactor.

It is found in the cytoplasm. The enzyme catalyses 2-methylpropane-1,2-diol + NAD(+) = 2-hydroxy-2-methylpropanal + NADH + H(+). In terms of biological role, involved in the degradation of methyl tert-butyl ether (MTBE). Catalyzes the conversion of 2-methyl 1,2-propanediol (2-M1,2-PD) to hydroxyisobutyraldehyde. In Mycolicibacterium austroafricanum (Mycobacterium austroafricanum), this protein is 2-methyl-1,2-propanediol dehydrogenase.